Reading from the N-terminus, the 315-residue chain is Neuroguidin (315 aa).

Position 2 is an N-acetylalanine (A2). Residues 13–41 (SAVTLLKNLQEQVMAVTAQVKSLTQKVQA) are a coiled coil. Positions 41 to 174 (AGAYPTEKGL…KGVSKKYVPP (134 aa)) are necessary for interaction with EIF4E. Phosphoserine is present on residues S121, S142, and S143. Residues 124 to 169 (ENDPLRFKPHPSNMMSKLSSEDEEEDEAEDDQSEASGKKSVKGVSK) are disordered. Positions 144-156 (EDEEEDEAEDDQS) are enriched in acidic residues. A coiled-coil region spans residues 181 to 205 (YDETEAEREKKRLERAKRRALSSSV). Phosphoserine is present on residues S204 and S214. The disordered stretch occupies residues 277–315 (DISALTGGTVHLDEDQNPIKKRKKIPQKGRKKKGFRRRR). The span at 295-315 (IKKRKKIPQKGRKKKGFRRRR) shows a compositional bias: basic residues.

Belongs to the SAS10 family. Part of the small subunit (SSU) processome, composed of more than 70 proteins and the RNA chaperone small nucleolar RNA (snoRNA) U3. Interacts with CPEB1 and EIF4E.

It localises to the nucleus. It is found in the nucleolus. Its subcellular location is the chromosome. The protein resides in the centromere. The protein localises to the cytoplasm. It localises to the cell projection. It is found in the axon. Its subcellular location is the dendrite. The protein resides in the filopodium. In terms of biological role, part of the small subunit (SSU) processome, first precursor of the small eukaryotic ribosomal subunit. During the assembly of the SSU processome in the nucleolus, many ribosome biogenesis factors, an RNA chaperone and ribosomal proteins associate with the nascent pre-rRNA and work in concert to generate RNA folding, modifications, rearrangements and cleavage as well as targeted degradation of pre-ribosomal RNA by the RNA exosome. Its dissociation from the complex determines the transition from state pre-A1 to state pre-A1*. Inhibits mRNA translation in a cytoplasmic polyadenylation element (CPE)-dependent manner. The protein is Neuroguidin of Homo sapiens (Human).